The primary structure comprises 110 residues: Thiosulfate sulfurtransferase GlpE (110 aa).

The region spanning 17–105 is the Rhodanese domain; it reads KKEGAVVVDI…WRATYPAETA (89 aa). C65 acts as the Cysteine persulfide intermediate in catalysis.

The protein belongs to the GlpE family.

Its subcellular location is the cytoplasm. It catalyses the reaction thiosulfate + hydrogen cyanide = thiocyanate + sulfite + 2 H(+). The catalysed reaction is thiosulfate + [thioredoxin]-dithiol = [thioredoxin]-disulfide + hydrogen sulfide + sulfite + 2 H(+). In terms of biological role, transferase that catalyzes the transfer of sulfur from thiosulfate to thiophilic acceptors such as cyanide or dithiols. May function in a CysM-independent thiosulfate assimilation pathway by catalyzing the conversion of thiosulfate to sulfite, which can then be used for L-cysteine biosynthesis. In Pseudomonas putida (strain ATCC 700007 / DSM 6899 / JCM 31910 / BCRC 17059 / LMG 24140 / F1), this protein is Thiosulfate sulfurtransferase GlpE.